A 194-amino-acid chain; its full sequence is Peroxiredoxin 2 (194 aa).

Positions 2–160 (PQLQKPAPAF…TLRLVQAFQY (159 aa)) constitute a Thioredoxin domain. The active-site Cysteine sulfenic acid (-SOH) intermediate is Cys47. At Thr193 the chain carries Phosphothreonine. The residue at position 194 (Ser194) is a Phosphoserine.

It belongs to the peroxiredoxin family. AhpC/Prx1 subfamily. As to quaternary structure, homodimer; disulfide-linked, upon oxidation. 5 homodimers assemble to form a ring-like decamer. Also exists as a monomer. In terms of processing, the enzyme can be inactivated by further oxidation of the cysteine sulfenic acid (C(P)-SOH) to sulphinic acid (C(P)-SO2H) instead of its condensation to a disulfide bond. It can be reactivated by forming a transient disulfide bond with sulfiredoxin SRXN1, which reduces the cysteine sulfinic acid in an ATP- and Mg-dependent manner. Post-translationally, conjugated to URM1, a ubiquitin-like protein. Detected in the head and body (at protein level).

It is found in the cytoplasm. The enzyme catalyses a hydroperoxide + [thioredoxin]-dithiol = an alcohol + [thioredoxin]-disulfide + H2O. Thiol-specific peroxidase that catalyzes the reduction of hydrogen peroxide and organic hydroperoxides to water and alcohols, respectively. Plays a role in cell protection against oxidative stress by detoxifying peroxides and as sensor of hydrogen peroxide-mediated signaling events. Might participate in the signaling cascades of growth factors and tumor necrosis factor-alpha by regulating the intracellular concentrations of H(2)O(2). Reduces an intramolecular disulfide bond in GDPD5 that gates the ability to GDPD5 to drive postmitotic motor neuron differentiation. This is Peroxiredoxin 2 from Drosophila melanogaster (Fruit fly).